A 167-amino-acid chain; its full sequence is Phospholipase A2 heteromtoxin (167 aa).

Residues W38, G40, and G42 each coordinate Ca(2+). 5 disulfide bridges follow: C39/C61, C60/C99, C67/C92, C90/C127, and C132/C144. The active site involves H64. D65 is a Ca(2+) binding site. A propeptide spanning residues 136–140 (GRSAR) is cleaved from the precursor.

It belongs to the phospholipase A2 family. Group III subfamily. Heterodimer composed of a large and a small subunits; disulfide-linked. Requires Ca(2+) as cofactor. In terms of tissue distribution, expressed by the venom gland.

Its subcellular location is the secreted. The catalysed reaction is a 1,2-diacyl-sn-glycero-3-phosphocholine + H2O = a 1-acyl-sn-glycero-3-phosphocholine + a fatty acid + H(+). Phospholipase toxin, which catalyzes the calcium-dependent hydrolysis of the 2-acyl groups in 3-sn-phosphoglycerides. Inhibits both skeletal (RYR1) and cardiac (RYR2) ryanodine receptors (calcium release channels). Probably blocks ryanodine receptors by generating a lipid product. This Heterometrus laoticus (Thai giant scorpion) protein is Phospholipase A2 heteromtoxin.